The following is a 469-amino-acid chain: Probable periplasmic serine endoprotease DegP-like (469 aa).

An N-terminal signal peptide occupies residues 1-25; it reads MKVCQKYTAVLLVWLSAVVSMRAGA. Active-site charge relay system residues include H108, D138, and S211. Residues 209–211 and 266–270 each bind substrate; these read GNS and LGVLI. 2 PDZ domains span residues 255-346 and 352-457; these read LKDT…VRRG and AVEI…IRQG.

It belongs to the peptidase S1C family.

The protein resides in the periplasm. The catalysed reaction is Acts on substrates that are at least partially unfolded. The cleavage site P1 residue is normally between a pair of hydrophobic residues, such as Val-|-Val.. Its function is as follows. Might be efficient in the degradation of transiently denatured and unfolded proteins which accumulate in the periplasm following stress conditions. The protein is Probable periplasmic serine endoprotease DegP-like (mucD) of Hahella chejuensis (strain KCTC 2396).